The following is a 284-amino-acid chain: 4-hydroxy-3-methylbut-2-enyl diphosphate reductase (284 aa).

Residue C12 participates in [4Fe-4S] cluster binding. Residues H40 and H76 each coordinate (2E)-4-hydroxy-3-methylbut-2-enyl diphosphate. Positions 40 and 76 each coordinate dimethylallyl diphosphate. H40 and H76 together coordinate isopentenyl diphosphate. C98 lines the [4Fe-4S] cluster pocket. H126 contributes to the (2E)-4-hydroxy-3-methylbut-2-enyl diphosphate binding site. H126 contacts dimethylallyl diphosphate. H126 lines the isopentenyl diphosphate pocket. The active-site Proton donor is E128. Residue T161 coordinates (2E)-4-hydroxy-3-methylbut-2-enyl diphosphate. Position 191 (C191) interacts with [4Fe-4S] cluster. Positions 219, 220, 221, and 263 each coordinate (2E)-4-hydroxy-3-methylbut-2-enyl diphosphate. 4 residues coordinate dimethylallyl diphosphate: S219, S220, N221, and S263. The isopentenyl diphosphate site is built by S219, S220, N221, and S263.

It belongs to the IspH family. [4Fe-4S] cluster is required as a cofactor.

It catalyses the reaction isopentenyl diphosphate + 2 oxidized [2Fe-2S]-[ferredoxin] + H2O = (2E)-4-hydroxy-3-methylbut-2-enyl diphosphate + 2 reduced [2Fe-2S]-[ferredoxin] + 2 H(+). It carries out the reaction dimethylallyl diphosphate + 2 oxidized [2Fe-2S]-[ferredoxin] + H2O = (2E)-4-hydroxy-3-methylbut-2-enyl diphosphate + 2 reduced [2Fe-2S]-[ferredoxin] + 2 H(+). It functions in the pathway isoprenoid biosynthesis; dimethylallyl diphosphate biosynthesis; dimethylallyl diphosphate from (2E)-4-hydroxy-3-methylbutenyl diphosphate: step 1/1. Its pathway is isoprenoid biosynthesis; isopentenyl diphosphate biosynthesis via DXP pathway; isopentenyl diphosphate from 1-deoxy-D-xylulose 5-phosphate: step 6/6. In terms of biological role, catalyzes the conversion of 1-hydroxy-2-methyl-2-(E)-butenyl 4-diphosphate (HMBPP) into a mixture of isopentenyl diphosphate (IPP) and dimethylallyl diphosphate (DMAPP). Acts in the terminal step of the DOXP/MEP pathway for isoprenoid precursor biosynthesis. The protein is 4-hydroxy-3-methylbut-2-enyl diphosphate reductase of Petrotoga mobilis (strain DSM 10674 / SJ95).